Consider the following 1410-residue polypeptide: DNA-directed RNA polymerase subunit beta' (1410 aa).

Zn(2+) contacts are provided by Cys69, Cys71, Cys84, and Cys87. Mg(2+)-binding residues include Asp461, Asp463, and Asp465. Positions 810, 884, 891, and 894 each coordinate Zn(2+).

The protein belongs to the RNA polymerase beta' chain family. The RNAP catalytic core consists of 2 alpha, 1 beta, 1 beta' and 1 omega subunit. When a sigma factor is associated with the core the holoenzyme is formed, which can initiate transcription. Mg(2+) serves as cofactor. It depends on Zn(2+) as a cofactor.

The catalysed reaction is RNA(n) + a ribonucleoside 5'-triphosphate = RNA(n+1) + diphosphate. DNA-dependent RNA polymerase catalyzes the transcription of DNA into RNA using the four ribonucleoside triphosphates as substrates. In Ehrlichia chaffeensis (strain ATCC CRL-10679 / Arkansas), this protein is DNA-directed RNA polymerase subunit beta'.